Here is a 227-residue protein sequence, read N- to C-terminus: Cytochrome c oxidase subunit 2 (227 aa).

At 1–14 (MAYPFQLGLQDATS) the chain is on the mitochondrial intermembrane side. The helical transmembrane segment at 15–45 (PIMEELLHFHDHTLMIVFLISSLVLYIISLM) threads the bilayer. Residues 46–59 (LTTKLTHTSTMDAQ) lie on the Mitochondrial matrix side of the membrane. A helical transmembrane segment spans residues 60–87 (EVETVWTILPAIILILIALPSLRILYMM). Residues 88-227 (DEINNPSLTV…YFETWSALMV (140 aa)) lie on the Mitochondrial intermembrane side of the membrane. Residues H161, C196, E198, C200, H204, and M207 each coordinate Cu cation. E198 provides a ligand contact to Mg(2+). A Phosphotyrosine modification is found at Y218.

Belongs to the cytochrome c oxidase subunit 2 family. As to quaternary structure, component of the cytochrome c oxidase (complex IV, CIV), a multisubunit enzyme composed of 14 subunits. The complex is composed of a catalytic core of 3 subunits MT-CO1, MT-CO2 and MT-CO3, encoded in the mitochondrial DNA, and 11 supernumerary subunits COX4I, COX5A, COX5B, COX6A, COX6B, COX6C, COX7A, COX7B, COX7C, COX8 and NDUFA4, which are encoded in the nuclear genome. The complex exists as a monomer or a dimer and forms supercomplexes (SCs) in the inner mitochondrial membrane with NADH-ubiquinone oxidoreductase (complex I, CI) and ubiquinol-cytochrome c oxidoreductase (cytochrome b-c1 complex, complex III, CIII), resulting in different assemblies (supercomplex SCI(1)III(2)IV(1) and megacomplex MCI(2)III(2)IV(2)). Found in a complex with TMEM177, COA6, COX18, COX20, SCO1 and SCO2. Interacts with TMEM177 in a COX20-dependent manner. Interacts with COX20. Interacts with COX16. Cu cation is required as a cofactor.

It localises to the mitochondrion inner membrane. It catalyses the reaction 4 Fe(II)-[cytochrome c] + O2 + 8 H(+)(in) = 4 Fe(III)-[cytochrome c] + 2 H2O + 4 H(+)(out). Its function is as follows. Component of the cytochrome c oxidase, the last enzyme in the mitochondrial electron transport chain which drives oxidative phosphorylation. The respiratory chain contains 3 multisubunit complexes succinate dehydrogenase (complex II, CII), ubiquinol-cytochrome c oxidoreductase (cytochrome b-c1 complex, complex III, CIII) and cytochrome c oxidase (complex IV, CIV), that cooperate to transfer electrons derived from NADH and succinate to molecular oxygen, creating an electrochemical gradient over the inner membrane that drives transmembrane transport and the ATP synthase. Cytochrome c oxidase is the component of the respiratory chain that catalyzes the reduction of oxygen to water. Electrons originating from reduced cytochrome c in the intermembrane space (IMS) are transferred via the dinuclear copper A center (CU(A)) of subunit 2 and heme A of subunit 1 to the active site in subunit 1, a binuclear center (BNC) formed by heme A3 and copper B (CU(B)). The BNC reduces molecular oxygen to 2 water molecules using 4 electrons from cytochrome c in the IMS and 4 protons from the mitochondrial matrix. This chain is Cytochrome c oxidase subunit 2 (MT-CO2), found in Canis mesomelas elongae (Eastern African black-backed jackal).